The following is a 260-amino-acid chain: Homeobox-leucine zipper protein HOX25 (260 aa).

The span at 1–10 (MEDLVDELYG) shows a compositional bias: acidic residues. Disordered stretches follow at residues 1–24 (MEDL…ARKR), 121–145 (ANGK…PESA), and 190–221 (SPES…YPSS). A DNA-binding region (homeobox) is located at residues 19 to 79 (AAARKRRLTA…NRRARWKTKQ (61 aa)). The tract at residues 78–122 (KQLELDFDRLRAAHDELLAGRAALAADNESLRSQVILLTEKLQAN) is leucine-zipper. The segment covering 205-218 (SEDDCGGAGSDDDY) has biased composition (acidic residues).

It belongs to the HD-ZIP homeobox family. Class I subfamily. Expressed in roots, leaf sheaths and blades and panicles.

It is found in the nucleus. Probable transcription factor. The protein is Homeobox-leucine zipper protein HOX25 (HOX25) of Oryza sativa subsp. indica (Rice).